Reading from the N-terminus, the 243-residue chain is Phosphoribosylaminoimidazole-succinocarboxamide synthase (243 aa).

Belongs to the SAICAR synthetase family.

The enzyme catalyses 5-amino-1-(5-phospho-D-ribosyl)imidazole-4-carboxylate + L-aspartate + ATP = (2S)-2-[5-amino-1-(5-phospho-beta-D-ribosyl)imidazole-4-carboxamido]succinate + ADP + phosphate + 2 H(+). Its pathway is purine metabolism; IMP biosynthesis via de novo pathway; 5-amino-1-(5-phospho-D-ribosyl)imidazole-4-carboxamide from 5-amino-1-(5-phospho-D-ribosyl)imidazole-4-carboxylate: step 1/2. The sequence is that of Phosphoribosylaminoimidazole-succinocarboxamide synthase from Lactiplantibacillus plantarum (strain ATCC BAA-793 / NCIMB 8826 / WCFS1) (Lactobacillus plantarum).